The primary structure comprises 378 residues: Isobutylamine N-hydroxylase (378 aa).

As to quaternary structure, exists in dimeric or trimeric form depending upon buffer conditions. It can form an isobutylamine N-hydroxylase two component enzyme system formed of a flavin reductase component (VlmR) and a monooxygenase component (VlmH).

It catalyses the reaction 2-methylpropan-1-amine + FADH2 + O2 = N-(2-methylpropyl)hydroxylamine + FAD + H2O + 2 H(+). It carries out the reaction 2-methylpropan-1-amine + FMNH2 + O2 = N-(2-methylpropyl)hydroxylamine + FMN + H2O + 2 H(+). Inhibited by 5',5'-dithio-bis(2-nitrobenzoic acid) (DTNB) and 4-(hydroxymercuri)benzoic acid (p-HMB). Functionally, involved in the biosynthesis of the azoxy antibiotic valanimycin, which has an antitumor activity. Catalyzes the oxidation of isobutylamine to isobutylhydroxylamine via the formation of a flavin 4a-hydroperoxide. Unlike other known N-hydroxylases, isobutylamine N-hydroxylase cannot carry out the reduction of the flavin cofactor and requires the NADPH-flavin oxidoreductase VlmR. Also able to oxidize propan-1-amine, butan-1-amine, butan-2-amine and benzylamine. It has a similar activity with either FMNH(2) or FADH(2). The chain is Isobutylamine N-hydroxylase from Streptomyces viridifaciens.